We begin with the raw amino-acid sequence, 141 residues long: Heavy metal-associated isoprenylated plant protein 29 (141 aa).

Residues 1 to 59 form the HMA domain; sequence MEVPMDCPGCENKVRKALEKMNGVHDVQIDIKQQRVTVTGSAEQKKVLKVARNVTKRDI. 2 residues coordinate a metal cation: Cys-7 and Cys-10. Cys-138 carries the cysteine methyl ester modification. Cys-138 carries the S-farnesyl cysteine lipid modification. A propeptide spans 139-141 (removed in mature form); it reads SIM.

The protein belongs to the HIPP family.

Its function is as follows. Heavy-metal-binding protein. The chain is Heavy metal-associated isoprenylated plant protein 29 from Arabidopsis thaliana (Mouse-ear cress).